The primary structure comprises 1065 residues: N-terminal acetyltransferase B complex auxiliary subunit NAA25 (1065 aa).

Residues 294–327 (VDKLRIQGRLLARANDYSAAVDVYKKILELSPDD) form a TPR repeat.

Belongs to the MDM20/NAA25 family. In terms of tissue distribution, ubiquitously expressed, with a higher expression in vascular bundles, hydathodes, leaf primordia and the base of the trichomes.

Its subcellular location is the cytoplasm. Its function is as follows. Auxiliary subunit of the NatB N-alpha-acetyltransferase complex. Required for flowering time regulation and for vegetative and reproductive plant development. The protein is N-terminal acetyltransferase B complex auxiliary subunit NAA25 of Arabidopsis thaliana (Mouse-ear cress).